The chain runs to 654 residues: Fructose-1,6-bisphosphatase class 3 (654 aa).

The interval 288–307 (NPAFKPKKRPDKHERLTQRE) is disordered. Basic and acidic residues predominate over residues 298–307 (DKHERLTQRE).

This sequence belongs to the FBPase class 3 family. The cofactor is Mn(2+).

The catalysed reaction is beta-D-fructose 1,6-bisphosphate + H2O = beta-D-fructose 6-phosphate + phosphate. It functions in the pathway carbohydrate biosynthesis; gluconeogenesis. The polypeptide is Fructose-1,6-bisphosphatase class 3 (Staphylococcus aureus (strain bovine RF122 / ET3-1)).